A 59-amino-acid chain; its full sequence is UPF0391 membrane protein GbCGDNIH1_2123 (59 aa).

A run of 2 helical transmembrane segments spans residues 6 to 26 (LALF…TGIS) and 35 to 55 (ILFV…LAAG).

The protein belongs to the UPF0391 family.

Its subcellular location is the cell membrane. The polypeptide is UPF0391 membrane protein GbCGDNIH1_2123 (Granulibacter bethesdensis (strain ATCC BAA-1260 / CGDNIH1)).